A 316-amino-acid chain; its full sequence is MSLRVVYLGTPQFAATVLKTLLDAHTHIVGVVTRADKPQKRSSKLISSPVKQLALSKNIPLLQPIKTTDPAFLAQLREWQADVFIVVAYGVILKQELLDIPTYGCYNLHAGLLPAYRGAAPIQRCIMDGGVLSGNTVIRMDAGMDTGDIANVNYVAIGEDMTAGGLAEALAASGGELLLKTLQEIEAGTVRHVPQNEAMATLAPKLTKEEGGIHWDAPASQVYAHIRGVSPAPGAWTRYLSQGKEARRLGVLSARMESFSGNYGDPGEVLGVSGEDLLIACRQGALRLRMVQPEGKASMKAKDFFNGQSRLVSKLF.

111–114 (GLLP) provides a ligand contact to (6S)-5,6,7,8-tetrahydrofolate.

The protein belongs to the Fmt family.

The catalysed reaction is L-methionyl-tRNA(fMet) + (6R)-10-formyltetrahydrofolate = N-formyl-L-methionyl-tRNA(fMet) + (6S)-5,6,7,8-tetrahydrofolate + H(+). In terms of biological role, attaches a formyl group to the free amino group of methionyl-tRNA(fMet). The formyl group appears to play a dual role in the initiator identity of N-formylmethionyl-tRNA by promoting its recognition by IF2 and preventing the misappropriation of this tRNA by the elongation apparatus. This is Methionyl-tRNA formyltransferase from Chlamydia trachomatis serovar L2b (strain UCH-1/proctitis).